Consider the following 1435-residue polypeptide: DNA polymerase III PolC-type (1435 aa).

Positions 420–576 constitute an Exonuclease domain; the sequence is YVVFDVETTG…YDTEATAYIF (157 aa).

It belongs to the DNA polymerase type-C family. PolC subfamily.

It localises to the cytoplasm. The enzyme catalyses DNA(n) + a 2'-deoxyribonucleoside 5'-triphosphate = DNA(n+1) + diphosphate. Its function is as follows. Required for replicative DNA synthesis. This DNA polymerase also exhibits 3' to 5' exonuclease activity. This Staphylococcus aureus protein is DNA polymerase III PolC-type.